Here is a 918-residue protein sequence, read N- to C-terminus: Translation initiation factor IF-2 (918 aa).

The interval 39–321 is disordered; that stretch reads DDASEKHLRN…KRDGRMKETT (283 aa). Low complexity predominate over residues 95–146; that stretch reads KSSNNESTTRNNNNNKNGNQNRNNTNGRPNNNQNRPNNNRNQNNNRNGNRPN. Over residues 148 to 158 the composition is skewed to basic and acidic residues; the sequence is PKRDEKQDRIR. A compositionally biased stretch (low complexity) spans 159–174; sequence ASVAEAARMAAQANRE. Residues 180–190 are compositionally biased toward polar residues; the sequence is PQANRQRTNSA. 3 stretches are compositionally biased toward low complexity: residues 201–231, 237–267, and 278–296; these read NNQN…NNRN, SRPN…TANN, and GRNN…QNRP. Over residues 302 to 313 the composition is skewed to basic residues; that stretch reads RKNKKRNRKAKR. One can recognise a tr-type G domain in the interval 419–588; that stretch reads SRPPVVTIMG…LLQAEVLELK (170 aa). The segment at 428-435 is G1; the sequence is GHVDHGKT. Position 428–435 (428–435) interacts with GTP; it reads GHVDHGKT. Residues 453 to 457 are G2; the sequence is GITQG. The G3 stretch occupies residues 474–477; it reads DTPG. Residues 474–478 and 528–531 each bind GTP; these read DTPGH and NKID. Residues 528–531 are G4; sequence NKID. The interval 564–566 is G5; that stretch reads SAK.

This sequence belongs to the TRAFAC class translation factor GTPase superfamily. Classic translation factor GTPase family. IF-2 subfamily.

It localises to the cytoplasm. In terms of biological role, one of the essential components for the initiation of protein synthesis. Protects formylmethionyl-tRNA from spontaneous hydrolysis and promotes its binding to the 30S ribosomal subunits. Also involved in the hydrolysis of GTP during the formation of the 70S ribosomal complex. The sequence is that of Translation initiation factor IF-2 from Pediococcus pentosaceus (strain ATCC 25745 / CCUG 21536 / LMG 10740 / 183-1w).